The following is a 432-amino-acid chain: Trigger factor (432 aa).

Positions 163–248 (GDVVVLDFAA…VHAVKERRLP (86 aa)) constitute a PPIase FKBP-type domain.

Belongs to the FKBP-type PPIase family. Tig subfamily.

It localises to the cytoplasm. The catalysed reaction is [protein]-peptidylproline (omega=180) = [protein]-peptidylproline (omega=0). Involved in protein export. Acts as a chaperone by maintaining the newly synthesized protein in an open conformation. Functions as a peptidyl-prolyl cis-trans isomerase. The chain is Trigger factor from Nitratidesulfovibrio vulgaris (strain DSM 19637 / Miyazaki F) (Desulfovibrio vulgaris).